The chain runs to 484 residues: Ribosomal RNA small subunit methyltransferase F (484 aa).

Residues 126–132, Glu-150, Asp-177, and Asp-195 contribute to the S-adenosyl-L-methionine site; that span reads AAAPGSK. Catalysis depends on Cys-248, which acts as the Nucleophile.

Belongs to the class I-like SAM-binding methyltransferase superfamily. RsmB/NOP family.

It is found in the cytoplasm. It carries out the reaction cytidine(1407) in 16S rRNA + S-adenosyl-L-methionine = 5-methylcytidine(1407) in 16S rRNA + S-adenosyl-L-homocysteine + H(+). Its function is as follows. Specifically methylates the cytosine at position 1407 (m5C1407) of 16S rRNA. In Pectobacterium carotovorum subsp. carotovorum (strain PC1), this protein is Ribosomal RNA small subunit methyltransferase F.